We begin with the raw amino-acid sequence, 177 residues long: Austinoid biosynthesis clusters protein F (177 aa).

Belongs to the trt14 isomerase family. Homodimer.

It functions in the pathway secondary metabolite biosynthesis; terpenoid biosynthesis. In terms of biological role, part of the gene cluster B that mediates the biosynthesis of austinol and dehydroaustinol, two fungal meroterpenoids. The first step of the pathway is the synthesis of 3,5-dimethylorsellinic acid by the polyketide synthase ausA. 3,5-dimethylorsellinic acid is then prenylated by the polyprenyl transferase ausN. Further epoxidation by the FAD-dependent monooxygenase ausM and cyclization by the probable terpene cyclase ausL lead to the formation of protoaustinoid A. Protoaustinoid A is then oxidized to spiro-lactone preaustinoid A3 by the combined action of the FAD-binding monooxygenases ausB and ausC, and the dioxygenase ausE. Acid-catalyzed keto-rearrangement and ring contraction of the tetraketide portion of preaustinoid A3 by ausJ lead to the formation of preaustinoid A4. The aldo-keto reductase ausK, with the help of ausH, is involved in the next step by transforming preaustinoid A4 into isoaustinone which is in turn hydroxylated by the P450 monooxygenase ausI to form austinolide. Finally, the cytochrome P450 monooxygenase ausG modifies austinolide to austinol. Austinol can be further modified to dehydroaustinol which forms a diffusible complex with diorcinol that initiates conidiation. Due to genetic rearrangements of the clusters and the subsequent loss of some enzymes, the end products of the Emericella nidulans austinoid biosynthesis clusters are austinol and dehydroaustinol, even if additional enzymes, such as the O-acetyltransferase ausQ and the cytochrome P450 monooxygenase ausR are still functional. In Emericella nidulans (strain FGSC A4 / ATCC 38163 / CBS 112.46 / NRRL 194 / M139) (Aspergillus nidulans), this protein is Austinoid biosynthesis clusters protein F.